The primary structure comprises 500 residues: Alpha-L-arabinofuranosidase (500 aa).

Residues 1-21 (MLSNARIIAAGCIAAGSLVAA) form the signal peptide. Residue Asn467 is glycosylated (N-linked (GlcNAc...) asparagine).

Belongs to the glycosyl hydrolase 54 family.

It carries out the reaction Hydrolysis of terminal non-reducing alpha-L-arabinofuranoside residues in alpha-L-arabinosides.. Its pathway is glycan metabolism; L-arabinan degradation. This Hypocrea jecorina (Trichoderma reesei) protein is Alpha-L-arabinofuranosidase (abf1).